Consider the following 120-residue polypeptide: Large ribosomal subunit protein bL17 (120 aa).

The protein belongs to the bacterial ribosomal protein bL17 family. In terms of assembly, part of the 50S ribosomal subunit. Contacts protein L32.

The protein is Large ribosomal subunit protein bL17 of Desulforapulum autotrophicum (strain ATCC 43914 / DSM 3382 / VKM B-1955 / HRM2) (Desulfobacterium autotrophicum).